The primary structure comprises 843 residues: Probable disease resistance protein At5g47250 (843 aa).

Positions 28–58 (MLKENLVLLKSAFDELKAEKEDVVNRVNAGE) form a coiled coil. One can recognise an NB-ARC domain in the interval 141–440 (TEQPPPPVVE…GEGFIDEKDG (300 aa)). 183–190 (GMGGVGKT) lines the ATP pocket. LRR repeat units follow at residues 510 to 531 (TVTKMSLFNNEIKNIPDDPEFP), 535 to 556 (NLVTLFLQNNRLVDIVGKFFLV), 559 to 581 (TLVVLDLSWNFQITELPKGISAL), 583 to 604 (SLRLLNLSGTSIKHLPEGLGVL), and 606 to 628 (KLIHLNLESTSNLRSVGLISELQ).

This sequence belongs to the disease resistance NB-LRR family.

In terms of biological role, probable disease resistance protein. The sequence is that of Probable disease resistance protein At5g47250 from Arabidopsis thaliana (Mouse-ear cress).